The chain runs to 505 residues: Flagellin (505 aa).

Belongs to the bacterial flagellin family.

It is found in the secreted. The protein resides in the bacterial flagellum. In terms of biological role, flagellin is the subunit protein which polymerizes to form the filaments of bacterial flagella. The protein is Flagellin (fliC) of Salmonella rostock.